Here is a 272-residue protein sequence, read N- to C-terminus: MAVPPLFFLLTLLSLPSLLISAGASNAYPSIPGTAPIDGGFTDELKPIRREVYGNGKIYDISHRYTPEMPSWDSSEGIGRFLWLAASMKNGSLANNSEMKIPTHTGTHVDSPGHVYDKYYDAGFDVDSLDLQVLNGLALLVDVPKDKNITAEVMKSLHIPKGVSRVLFRTLNTDRRLMFKKEFDTSYVGFMKDGAQWLVDNTDIKLVGIDYLSVAAYDDLIPSHLVFLKDRETILVEGLKLDGVKAGLYSVHCLPLRLVGAEGSPIRCILID.

The signal sequence occupies residues 1 to 24; the sequence is MAVPPLFFLLTLLSLPSLLISAGA.

It belongs to the Cyclase 1 superfamily.

Its subcellular location is the secreted. It localises to the extracellular space. It is found in the extracellular matrix. Functionally, may function redundantly with CYCLASE1 for normal plant growth, development and viability. The protein is Cyclase-like protein 2 of Arabidopsis thaliana (Mouse-ear cress).